Reading from the N-terminus, the 207-residue chain is MTKVKICGITTVADAMMAVEAGADALGFVFYDQSPRNLEPAQAAEIIRVLPPFVQVVGLFVHAPLDFINTVTDRCRLDVVQLHGDEPQEFCAAVNRRVIKAFRIKDITSLDHMDEYNVAGYLLDAWSPKAFGGTGVTFNWDTALIAKKFGPIILAGGLTPENVAEAVHYVSPYGVDVSSGVEAAHRVKDPEKVRQFIQRAKECLGSM.

The protein belongs to the TrpF family.

The enzyme catalyses N-(5-phospho-beta-D-ribosyl)anthranilate = 1-(2-carboxyphenylamino)-1-deoxy-D-ribulose 5-phosphate. Its pathway is amino-acid biosynthesis; L-tryptophan biosynthesis; L-tryptophan from chorismate: step 3/5. The sequence is that of N-(5'-phosphoribosyl)anthranilate isomerase from Geotalea daltonii (strain DSM 22248 / JCM 15807 / FRC-32) (Geobacter daltonii).